The following is a 78-amino-acid chain: Acyl carrier protein (78 aa).

A Carrier domain is found at serine 2–leucine 77. An O-(pantetheine 4'-phosphoryl)serine modification is found at serine 37.

It belongs to the acyl carrier protein (ACP) family. 4'-phosphopantetheine is transferred from CoA to a specific serine of apo-ACP by AcpS. This modification is essential for activity because fatty acids are bound in thioester linkage to the sulfhydryl of the prosthetic group.

It is found in the cytoplasm. The protein operates within lipid metabolism; fatty acid biosynthesis. Carrier of the growing fatty acid chain in fatty acid biosynthesis. In Cellvibrio japonicus (strain Ueda107) (Pseudomonas fluorescens subsp. cellulosa), this protein is Acyl carrier protein.